The primary structure comprises 345 residues: D-fructose 1,6-bisphosphatase class 2/sedoheptulose 1,7-bisphosphatase (345 aa).

Mn(2+) contacts are provided by Asp33, Glu57, Asp97, and Glu100. Residues 100 to 102, Tyr131, 176 to 178, and 198 to 200 contribute to the substrate site; these read EGT, RDR, and DGD. Residue Glu225 participates in Mn(2+) binding.

It belongs to the FBPase class 2 family. Homotetramer. Mn(2+) serves as cofactor.

The enzyme catalyses beta-D-fructose 1,6-bisphosphate + H2O = beta-D-fructose 6-phosphate + phosphate. It catalyses the reaction D-sedoheptulose 1,7-bisphosphate + H2O = D-sedoheptulose 7-phosphate + phosphate. It participates in carbohydrate biosynthesis; Calvin cycle. Its function is as follows. Catalyzes the hydrolysis of fructose 1,6-bisphosphate (Fru 1,6-P2) and sedoheptulose 1,7-bisphosphate (Sed 1,7-P2) to fructose 6-phosphate and sedoheptulose 7-phosphate, respectively. This Nostoc sp. (strain PCC 7120 / SAG 25.82 / UTEX 2576) protein is D-fructose 1,6-bisphosphatase class 2/sedoheptulose 1,7-bisphosphatase.